Consider the following 237-residue polypeptide: (5-formylfuran-3-yl)methyl phosphate synthase (237 aa).

The Schiff-base intermediate with substrate role is filled by Lys29. Lys87 functions as the Proton acceptor in the catalytic mechanism.

The protein belongs to the MfnB family.

The catalysed reaction is 2 D-glyceraldehyde 3-phosphate = 4-(hydroxymethyl)-2-furancarboxaldehyde phosphate + phosphate + 2 H2O. Its pathway is cofactor biosynthesis; methanofuran biosynthesis. Functionally, catalyzes the formation of 4-(hydroxymethyl)-2-furancarboxaldehyde phosphate (4-HFC-P) from two molecules of glyceraldehyde-3-P (GA-3-P). This is (5-formylfuran-3-yl)methyl phosphate synthase from Methanopyrus kandleri (strain AV19 / DSM 6324 / JCM 9639 / NBRC 100938).